Reading from the N-terminus, the 209-residue chain is Guanylate kinase (209 aa).

The Guanylate kinase-like domain maps to 5 to 184; that stretch reads GLLIVFSGPS…AAERVKRVIE (180 aa). 12–19 is an ATP binding site; the sequence is GPSGVGKG.

It belongs to the guanylate kinase family.

The protein localises to the cytoplasm. The catalysed reaction is GMP + ATP = GDP + ADP. Essential for recycling GMP and indirectly, cGMP. The protein is Guanylate kinase of Streptococcus thermophilus (strain CNRZ 1066).